The primary structure comprises 166 residues: Interleukin-3 (166 aa).

The N-terminal stretch at 1 to 26 is a signal peptide; it reads MVLASSTTSIHTMLLLLLMLFHLGLQ. Asn-42 carries an N-linked (GlcNAc...) asparagine glycan. 2 cysteine pairs are disulfide-bonded: Cys-43–Cys-106 and Cys-105–Cys-166. An N-linked (GlcNAc...) asparagine; partial glycan is attached at Asn-112. Residues 145–166 are disordered; sequence LTSRPPQPASGSVSPNRGTVEC.

It belongs to the IL-3 family. In terms of assembly, monomer. In terms of tissue distribution, activated T-cells, mast cells, natural killer cells.

It is found in the secreted. Its function is as follows. Cytokine secreted predominantly by activated T-lymphocytes as well as mast cells and osteoblastic cells that controls the production and differentiation of hematopoietic progenitor cells into lineage-restricted cells. Also stimulates mature basophils, eosinophils, and monocytes to become functionally activated. In addition, plays an important role in neural cell proliferation and survival. Participates as well in bone homeostasis and inhibits osteoclast differentiation by preventing NF-kappa-B nuclear translocation and activation. Mechanistically, exerts its biological effects through a receptor composed of IL3RA subunit and a signal transducing subunit IL3RB. Receptor stimulation results in the rapid activation of JAK2 kinase activity leading to STAT5-mediated transcriptional program. Alternatively, contributes to cell survival under oxidative stress in non-hematopoietic systems by activating pathways mediated by PI3K/AKT and ERK. The sequence is that of Interleukin-3 (Il3) from Mus musculus (Mouse).